Here is a 101-residue protein sequence, read N- to C-terminus: Small ribosomal subunit protein uS14A (101 aa).

Belongs to the universal ribosomal protein uS14 family. In terms of assembly, part of the 30S ribosomal subunit. Contacts proteins S3 and S10.

In terms of biological role, binds 16S rRNA, required for the assembly of 30S particles and may also be responsible for determining the conformation of the 16S rRNA at the A site. This chain is Small ribosomal subunit protein uS14A, found in Salinispora tropica (strain ATCC BAA-916 / DSM 44818 / JCM 13857 / NBRC 105044 / CNB-440).